Here is a 182-residue protein sequence, read N- to C-terminus: Doublesex- and mab-3-related transcription factor C1 (182 aa).

T15 is subject to Phosphoserine. The span at 26–39 shows a compositional bias: polar residues; the sequence is AQVDTATQEESSQG. Disordered stretches follow at residues 26–48 and 136–174; these read AQVD…QHPE and QTRH…PSGH.

The protein belongs to the DMRT family. In terms of tissue distribution, expressed in Sertoli cells in male testis.

This is Doublesex- and mab-3-related transcription factor C1 (Dmrtc1) from Mus musculus (Mouse).